Reading from the N-terminus, the 747-residue chain is Tegument protein UL46 homolog (747 aa).

Disordered regions lie at residues 437 to 484, 525 to 593, 611 to 665, and 689 to 747; these read FCCP…SPRT, QRSD…DYMR, TPYM…PEVV, and SASR…VSSL. Residues 465–484 show a composition bias toward polar residues; sequence LRSSRQLPTSPPSNIVSPRT. Over residues 528–540 the composition is skewed to low complexity; the sequence is DSSSSDNSTCSST. The segment covering 541–553 has biased composition (polar residues); sequence ETQYITLPSTPSP. 2 stretches are compositionally biased toward basic and acidic residues: residues 707–724 and 736–747; these read VCRERDEESAEPRHDGFI and KHPDQTERVSSL.

It belongs to the herpesviridae HHV-1 VP11/12 protein family.

Its subcellular location is the virion tegument. The protein localises to the host cell membrane. In terms of biological role, modulates alpha trans-inducing factor-dependent activation of alpha genes. This chain is Tegument protein UL46 homolog, found in Equine herpesvirus 1 (strain Ab4p) (EHV-1).